The sequence spans 152 residues: Aspartate carbamoyltransferase regulatory chain (152 aa).

4 residues coordinate Zn(2+): C108, C113, C136, and C139.

It belongs to the PyrI family. In terms of assembly, contains catalytic and regulatory chains. Zn(2+) is required as a cofactor.

Its function is as follows. Involved in allosteric regulation of aspartate carbamoyltransferase. This chain is Aspartate carbamoyltransferase regulatory chain, found in Thermococcus kodakarensis (strain ATCC BAA-918 / JCM 12380 / KOD1) (Pyrococcus kodakaraensis (strain KOD1)).